The chain runs to 713 residues: Topoisomerase subunit TopoM (713 aa).

In terms of domain architecture, Topo IIA-type catalytic spans 41–504; sequence IPSAYDGLKP…DATPVSRGDE (464 aa). Tyr128 (O-(5'-phospho-DNA)-tyrosine intermediate) is an active-site residue. Residues 694-713 are disordered; it reads NRAKASIKGSGADVTPAPAE.

This sequence belongs to the type II topoisomerase GyrA/ParC subunit family. A complex of TopoN and TopoM, possibly a heterotetramer. Requires Mg(2+) as cofactor.

It carries out the reaction ATP-dependent breakage, passage and rejoining of double-stranded DNA.. With respect to regulation, inhibited by quinolone antibiotic ciprofloxacin and coumarin antibiotic novobiocin, but at much higher concentrations than is usual for DNA gyrase/topoisomerase. Functionally, catalyzes the relaxation of negatively supercoiled DNA in the presence of ATP or dATP but not other nucleotides. Individual subunits have no activity. Not able to negatively supercoil DNA, it can however introduce positive supercoils in DNA. Relaxes positive supercoils in an ATP-dependent manner. Catenates and decatenates DNA. Generates dsDNA breaks in the presence of the quinolone antibiotic ciprofloxacin, showing it is a topoisomerase. This is Topoisomerase subunit TopoM from Mycolicibacterium smegmatis (strain ATCC 700084 / mc(2)155) (Mycobacterium smegmatis).